Here is a 182-residue protein sequence, read N- to C-terminus: ATP-dependent protease subunit HslV (182 aa).

Thr-12 is an active-site residue. 3 residues coordinate Na(+): Ala-167, Cys-170, and Thr-173.

This sequence belongs to the peptidase T1B family. HslV subfamily. In terms of assembly, a double ring-shaped homohexamer of HslV is capped on each side by a ring-shaped HslU homohexamer. The assembly of the HslU/HslV complex is dependent on binding of ATP.

The protein localises to the cytoplasm. The enzyme catalyses ATP-dependent cleavage of peptide bonds with broad specificity.. Its activity is regulated as follows. Allosterically activated by HslU binding. Functionally, protease subunit of a proteasome-like degradation complex believed to be a general protein degrading machinery. The chain is ATP-dependent protease subunit HslV from Chlorobium phaeovibrioides (strain DSM 265 / 1930) (Prosthecochloris vibrioformis (strain DSM 265)).